The chain runs to 216 residues: Elongation factor Ts (216 aa).

The interval 81-84 (TDFV) is involved in Mg(2+) ion dislocation from EF-Tu.

Belongs to the EF-Ts family.

It is found in the cytoplasm. Functionally, associates with the EF-Tu.GDP complex and induces the exchange of GDP to GTP. It remains bound to the aminoacyl-tRNA.EF-Tu.GTP complex up to the GTP hydrolysis stage on the ribosome. The polypeptide is Elongation factor Ts (Geobacter sp. (strain M21)).